The primary structure comprises 281 residues: MEMO1 family protein PAE0818 (281 aa).

The protein belongs to the MEMO1 family.

The polypeptide is MEMO1 family protein PAE0818 (Pyrobaculum aerophilum (strain ATCC 51768 / DSM 7523 / JCM 9630 / CIP 104966 / NBRC 100827 / IM2)).